We begin with the raw amino-acid sequence, 474 residues long: Glutamate--tRNA ligase 1 (474 aa).

Positions 10-20 (PSPTGFLHIGG) match the 'HIGH' region motif. The 'KMSKS' region motif lies at 239-243 (KLSKR). Residue K242 participates in ATP binding.

The protein belongs to the class-I aminoacyl-tRNA synthetase family. Glutamate--tRNA ligase type 1 subfamily. Monomer.

Its subcellular location is the cytoplasm. It carries out the reaction tRNA(Glu) + L-glutamate + ATP = L-glutamyl-tRNA(Glu) + AMP + diphosphate. In terms of biological role, catalyzes the attachment of glutamate to tRNA(Glu) in a two-step reaction: glutamate is first activated by ATP to form Glu-AMP and then transferred to the acceptor end of tRNA(Glu). This chain is Glutamate--tRNA ligase 1, found in Methylobacterium sp. (strain 4-46).